A 66-amino-acid chain; its full sequence is Putative membrane protein insertion efficiency factor (66 aa).

This sequence belongs to the UPF0161 family.

It is found in the cell inner membrane. Its function is as follows. Could be involved in insertion of integral membrane proteins into the membrane. This is Putative membrane protein insertion efficiency factor from Parasynechococcus marenigrum (strain WH8102).